The sequence spans 474 residues: 15-cis-phytoene desaturase (474 aa).

This sequence belongs to the carotenoid/retinoid oxidoreductase family.

It localises to the cell membrane. The catalysed reaction is 2 a plastoquinone + 15-cis-phytoene = 9,9',15-tri-cis-zeta-carotene + 2 a plastoquinol. It functions in the pathway carotenoid biosynthesis; lycopene biosynthesis. Its activity is regulated as follows. Inhibited by the herbicide norflurazon in a non-competitive way. In terms of biological role, this enzyme converts phytoene into zeta-carotene via the intermediary of phytofluene by the symmetrical introduction of two double bonds at the C-11 and C-11' positions of phytoene. Also active with phytofluene and 1,2-epoxyphytoene as substrates. The sequence is that of 15-cis-phytoene desaturase (pds) from Synechococcus elongatus (strain ATCC 33912 / PCC 7942 / FACHB-805) (Anacystis nidulans R2).